We begin with the raw amino-acid sequence, 417 residues long: Serine hydroxymethyltransferase (417 aa).

(6S)-5,6,7,8-tetrahydrofolate contacts are provided by residues leucine 121 and 125 to 127; that span reads GHL. The residue at position 229 (lysine 229) is an N6-(pyridoxal phosphate)lysine. 355–357 is a binding site for (6S)-5,6,7,8-tetrahydrofolate; sequence SPF.

The protein belongs to the SHMT family. Homodimer. It depends on pyridoxal 5'-phosphate as a cofactor.

The protein localises to the cytoplasm. The enzyme catalyses (6R)-5,10-methylene-5,6,7,8-tetrahydrofolate + glycine + H2O = (6S)-5,6,7,8-tetrahydrofolate + L-serine. Its pathway is one-carbon metabolism; tetrahydrofolate interconversion. The protein operates within amino-acid biosynthesis; glycine biosynthesis; glycine from L-serine: step 1/1. Its function is as follows. Catalyzes the reversible interconversion of serine and glycine with tetrahydrofolate (THF) serving as the one-carbon carrier. This reaction serves as the major source of one-carbon groups required for the biosynthesis of purines, thymidylate, methionine, and other important biomolecules. Also exhibits THF-independent aldolase activity toward beta-hydroxyamino acids, producing glycine and aldehydes, via a retro-aldol mechanism. This Salmonella choleraesuis (strain SC-B67) protein is Serine hydroxymethyltransferase.